The sequence spans 129 residues: D-ribose pyranase (129 aa).

Residue His-20 is the Proton donor of the active site. Substrate is bound by residues Asp-28, His-96, and Tyr-118–Asn-120.

This sequence belongs to the RbsD / FucU family. RbsD subfamily. Homodecamer.

The protein localises to the cytoplasm. It carries out the reaction beta-D-ribopyranose = beta-D-ribofuranose. The protein operates within carbohydrate metabolism; D-ribose degradation; D-ribose 5-phosphate from beta-D-ribopyranose: step 1/2. Catalyzes the interconversion of beta-pyran and beta-furan forms of D-ribose. In Exiguobacterium sp. (strain ATCC BAA-1283 / AT1b), this protein is D-ribose pyranase.